We begin with the raw amino-acid sequence, 123 residues long: Snaclec GPIB-binding protein subunit beta (123 aa).

3 disulfide bridges follow: C2–C13, C30–C119, and C96–C111. Positions 9–120 (YGGHCYKLFK…CTRLQYFVCE (112 aa)) constitute a C-type lectin domain.

This sequence belongs to the snaclec family. As to quaternary structure, heterodimer of subunits alpha and beta; disulfide-linked. As to expression, expressed by the venom gland.

It localises to the secreted. Its function is as follows. Binds to platelet GPIb (subunit alpha) (GP1BA) and functions as a receptor blocker for vWF binding to GPIb. The platelet GPIb-binding site resides on the GPIB-BP subunit beta and not on the alpha subunit. At a final concentration of 104 nM totally abolishes vWF-dependent shear-induced platelet aggregation (SIPA) at a high shear stress, but had no effect on SIPA at a low shear stress. In Bothrops jararaca (Jararaca), this protein is Snaclec GPIB-binding protein subunit beta.